Reading from the N-terminus, the 452-residue chain is Keratin, type II cytoskeletal 80 (452 aa).

The segment at 1–82 (MACRSCVVGF…DPAVQQLKNQ (82 aa)) is head. At Ser-45 the chain carries Phosphoserine. The coil 1A stretch occupies residues 82–118 (QEKEEMKALNDKFASLIGKVQALEQRNQLLETRWSFL). One can recognise an IF rod domain in the interval 83-394 (EKEEMKALND…KLVEGEEGRM (312 aa)). Positions 119-135 (QGQDSAIFDLGHLYEEY) are linker 1. Residues 136–227 (QGRLQEELRK…TIYEQELKDL (92 aa)) form a coil 1B region. Residues 228–251 (AAQVKDVSVTVGMDSRCHIDLSGI) form a linker 12 region. The segment at 252-390 (VEEVKAQYDA…ATYRKLVEGE (139 aa)) is coil 2. The interval 391-452 (EGRMDSPSAT…YFSQESEVSE (62 aa)) is tail. Ser-396 carries the post-translational modification Phosphoserine. A disordered region spans residues 412–434 (AASRSGLSKAPSRKKKGSKGPVI).

It belongs to the intermediate filament family. In terms of assembly, heterotetramer of two type I and two type II keratins. In terms of tissue distribution, weakly expressed in tongue, but not skin or in any other tissues or organs examined.

This Homo sapiens (Human) protein is Keratin, type II cytoskeletal 80 (KRT80).